Consider the following 103-residue polypeptide: Large ribosomal subunit protein uL24 (103 aa).

This sequence belongs to the universal ribosomal protein uL24 family. Part of the 50S ribosomal subunit.

One of two assembly initiator proteins, it binds directly to the 5'-end of the 23S rRNA, where it nucleates assembly of the 50S subunit. In terms of biological role, one of the proteins that surrounds the polypeptide exit tunnel on the outside of the subunit. This chain is Large ribosomal subunit protein uL24, found in Brucella abortus (strain S19).